We begin with the raw amino-acid sequence, 283 residues long: Pantothenate synthetase (283 aa).

30 to 37 (MGNLHSGH) is a binding site for ATP. Residue histidine 37 is the Proton donor of the active site. Position 61 (glutamine 61) interacts with (R)-pantoate. A beta-alanine-binding site is contributed by glutamine 61. Residue 149–152 (GQKD) participates in ATP binding. Glutamine 155 is a (R)-pantoate binding site. ATP is bound by residues valine 178 and 186–189 (LSSR).

This sequence belongs to the pantothenate synthetase family. In terms of assembly, homodimer.

Its subcellular location is the cytoplasm. It catalyses the reaction (R)-pantoate + beta-alanine + ATP = (R)-pantothenate + AMP + diphosphate + H(+). Its pathway is cofactor biosynthesis; (R)-pantothenate biosynthesis; (R)-pantothenate from (R)-pantoate and beta-alanine: step 1/1. In terms of biological role, catalyzes the condensation of pantoate with beta-alanine in an ATP-dependent reaction via a pantoyl-adenylate intermediate. The polypeptide is Pantothenate synthetase (Pseudomonas fluorescens (strain SBW25)).